A 920-amino-acid polypeptide reads, in one-letter code: MWLAAAVPSLARRLLLLGPPPPPLLLLLSRSSRRRRRLHSLGLAAMPEKRPFERLPAEVSPINYSLCLKPDLLDFTFEGKLEAAAQVRQATNQIVMNCADIDIITASYAPEGDEEIHATGFNYQNEDEKVTLSFPSTLQTGTGTLKIDFVGELNDKMKGFYRSRYTTPAGEVRYAAVTQFEATDARRAFPCWDEPAIKATFDISLVVPKDRVALSNMNVIDRKPYPDDENLVEVKFARTPVMSTYLVAFVVGEYDFVETRSKDGVCVRVYTPVGKAEQGKFALEVAAKTLPFYKDYFNVPYPLPKIDLIAIADFAAGAMENWGLVTYRETALLIDPKNSCSSSRQWVALVVGHELAHQWFGNLVTMEWWTHLWLNEGFASWIEYLCVDHCFPEYDIWTQFVSADYTRAQELDALDNSHPIEVSVGHPSEVDEIFDAISYSKGASVIRMLHDYIGDKDFKKGMNMYLTKFQQKNAATEDLWESLESASGKPIAAVMNTWTKQMGFPLIYVEAEQVEDDRVLKLSQKKFCASGPYGGEDCPQWMVPITISTSEDPNQAKLKILMDKPEMSVVLKNVKPDQWVKLNLGTVGFYRTQYSSAMLESLLPGIRDLSLPPVDRLGLQNDLFSLARAGIISTVEVLKVMEAFVNEPNYTVWSDLSCNLGILSTLLSHTDFYEEIQEFVKDVFSPIGERLGWDPKPGEGHLDALLRGLVLGKLGKAGHKATLEEARRRFKEHVEGKQILSADLRSPVYLTVLKHGDGATLDIMLKLHKQADMQEEKNRIERVLGATLSPELIQKVLTFALSEEVRPQDTVSVIGGVAGGSKHGRKAAWKFIKDNWEELHNRYQGGFLISRLIKLSVEGFAVDKMAGEVKAFFESHPAPSAERTIQQCCENILLNAAWLKRDADSIHQYLLQRKTSPPSV.

Substrate contacts are provided by residues E181 and 317–321; that span reads GAMEN. H353 is a binding site for Zn(2+). E354 acts as the Proton acceptor in catalysis. H357 and E376 together coordinate Zn(2+). Y465 is modified (3'-nitrotyrosine). Positions 727–731 match the Nuclear localization signal motif; the sequence is RRRFK.

This sequence belongs to the peptidase M1 family. As to quaternary structure, monomer. Zn(2+) serves as cofactor. Widely expressed. Highest expression in brain, particularly the striatum and hippocampus. Expressed in Sertoli cells.

Its subcellular location is the cytoplasm. The protein resides in the cytosol. It is found in the nucleus. It carries out the reaction Release of an N-terminal amino acid, preferentially alanine, from a wide range of peptides, amides and arylamides.. Its activity is regulated as follows. Strongly inhibited by bestatin, leuhistin, actinonin, amastatin, 1,10-phenanthroline, DFP, PCMBS, Zn(2+), Cd(2+), Co(2+), Cu(2+), Hg(2+), EDTA and puromycin. Not inhibited by PMSF, and only slightly inhibited by leupeptin and aprotinin. Activity is increased by Mg(2+) and Ca(2+). In terms of biological role, aminopeptidase with broad substrate specificity for several peptides. Involved in proteolytic events essential for cell growth and viability. May act as regulator of neuropeptide activity. Plays a role in the antigen-processing pathway for MHC class I molecules. Involved in the N-terminal trimming of cytotoxic T-cell epitope precursors. Digests the poly-Q peptides found in many cellular proteins. The protein is Puromycin-sensitive aminopeptidase (Npepps) of Mus musculus (Mouse).